The sequence spans 356 residues: Guanine nucleotide-binding protein alpha-15 subunit (356 aa).

Gly2 is lipidated: N-myristoyl glycine. Cys5 carries the S-palmitoyl cysteine lipid modification. A G-alpha domain is found at 33–356 (GNQKLLLLGT…GRNLRGTGME (324 aa)). The segment at 36–49 (KLLLLGTGECGKST) is G1 motif. Residues 41–48 (GTGECGKS), 177–183 (LRIRIPT), 202–206 (DVGGQ), 271–274 (NKRD), and Ala328 contribute to the GTP site. Positions 48 and 183 each coordinate Mg(2+). The G2 motif stretch occupies residues 175-183 (DMLRIRIPT). Positions 198-207 (FRIYDVGGQR) are G3 motif. Residues 267-274 (ILFLNKRD) are G4 motif. The G5 motif stretch occupies residues 326-331 (TCATDT).

Belongs to the G-alpha family. As to quaternary structure, g proteins are composed of 3 units; alpha, beta and gamma. The alpha chain contains the guanine nucleotide binding site.

Functionally, guanine nucleotide-binding proteins (G proteins) are involved as modulators or transducers in various transmembrane signaling systems. This is Guanine nucleotide-binding protein alpha-15 subunit (gpa-15) from Caenorhabditis elegans.